The chain runs to 446 residues: Signal recognition particle protein (446 aa).

GTP-binding positions include 108 to 115, 191 to 195, and 249 to 252; these read GLQGAGKT, DTAGR, and TKLD.

The protein belongs to the GTP-binding SRP family. SRP54 subfamily. Part of the signal recognition particle protein translocation system, which is composed of SRP and FtsY. Interacts with a small cytoplasmic RNA (sc-RNA).

The protein localises to the cytoplasm. The enzyme catalyses GTP + H2O = GDP + phosphate + H(+). Involved in targeting and insertion of nascent membrane proteins into the cytoplasmic membrane. Binds to the hydrophobic signal sequence of the ribosome-nascent chain (RNC) as it emerges from the ribosomes. The SRP-RNC complex is then targeted to the cytoplasmic membrane where it interacts with the SRP receptor FtsY. Interaction with FtsY leads to the transfer of the RNC complex to the Sec translocase for insertion into the membrane, the hydrolysis of GTP by both Ffh and FtsY, and the dissociation of the SRP-FtsY complex into the individual components. The polypeptide is Signal recognition particle protein (Bacillus subtilis (strain 168)).